A 930-amino-acid chain; its full sequence is Protein translocase subunit SecA (930 aa).

Residues Gln83, 101-105 (GEGKT), and Asp491 contribute to the ATP site.

This sequence belongs to the SecA family. Monomer and homodimer. Part of the essential Sec protein translocation apparatus which comprises SecA, SecYEG and auxiliary proteins SecDF. Other proteins may also be involved.

It localises to the cell inner membrane. It is found in the cellular thylakoid membrane. Its subcellular location is the cytoplasm. It carries out the reaction ATP + H2O + cellular proteinSide 1 = ADP + phosphate + cellular proteinSide 2.. In terms of biological role, part of the Sec protein translocase complex. Interacts with the SecYEG preprotein conducting channel. Has a central role in coupling the hydrolysis of ATP to the transfer of proteins into and across the cell membrane, serving as an ATP-driven molecular motor driving the stepwise translocation of polypeptide chains across the membrane. Functionally, probably participates in protein translocation into and across both the cytoplasmic and thylakoid membranes in cyanobacterial cells. The sequence is that of Protein translocase subunit SecA from Trichormus variabilis (strain ATCC 29413 / PCC 7937) (Anabaena variabilis).